The primary structure comprises 178 residues: Translation initiation factor IF-3 (178 aa).

The interval 1–20 (MRRPFKAAAPTKDGPRSNRD) is disordered.

It belongs to the IF-3 family. Monomer.

It is found in the cytoplasm. In terms of biological role, IF-3 binds to the 30S ribosomal subunit and shifts the equilibrium between 70S ribosomes and their 50S and 30S subunits in favor of the free subunits, thus enhancing the availability of 30S subunits on which protein synthesis initiation begins. This chain is Translation initiation factor IF-3, found in Mesorhizobium japonicum (strain LMG 29417 / CECT 9101 / MAFF 303099) (Mesorhizobium loti (strain MAFF 303099)).